A 1616-amino-acid polypeptide reads, in one-letter code: Protein P200 (1616 aa).

6 disordered regions span residues 1 to 41 (MPKT…DKVE), 878 to 909 (HFQP…QAEF), 931 to 975 (QQLE…LDQN), 1004 to 1083 (DNVE…EPVD), 1100 to 1132 (FDKN…TVGE), and 1159 to 1433 (ISEP…SEEE). The 2 X 26 AA repeats stretch occupies residues 891-1389 (EAKFDSPVEI…QEAKFDSPVE (499 aa)). A compositionally biased stretch (low complexity) spans 938–952 (EETVVTPTEVTAFEP). 2 stretches are compositionally biased toward basic and acidic residues: residues 1012 to 1029 (QPKE…KELQ) and 1059 to 1081 (VFEK…KSEP). Tandem repeats lie at residues 1161 to 1186 (EPQV…SPVE) and 1205 to 1236 (EIQP…SPVE). Composition is skewed to polar residues over residues 1200-1227 (VQTQ…QTPQ) and 1242-1251 (EFSSEPTQQH). The 2 X 32 AA repeats stretch occupies residues 1205–1389 (EIQPVESQPE…QEAKFDSPVE (185 aa)). Residues 1256–1270 (ASFDEPNYDFDEPNY) show a composition bias toward acidic residues. Polar residues predominate over residues 1276–1285 (SYDSDLQPSE). The span at 1288-1302 (YDVDEPNYDFDEPNY) shows a compositional bias: acidic residues. Positions 1309 to 1323 (SEPQFEPQVEQQPGE) are enriched in low complexity. 2 tandem repeats follow at residues 1310-1339 (EPQF…SPVE) and 1358-1389 (EIQP…SPVE). Positions 1353–1380 (VQTQPEIQPVESQPEATFDTVQPEQTPQ) are enriched in polar residues. Residues 1392 to 1406 (QEPQVSSEPEVVVQP) show a composition bias toward low complexity. The span at 1416–1433 (VLEEPQADEIQPEASEEE) shows a compositional bias: acidic residues.

In terms of biological role, could be an accessory structural component in cytadherence. The polypeptide is Protein P200 (Mycoplasma genitalium (strain ATCC 33530 / DSM 19775 / NCTC 10195 / G37) (Mycoplasmoides genitalium)).